Consider the following 196-residue polypeptide: DnaA initiator-associating protein DiaA (196 aa).

An SIS domain is found at 34 to 196 (LVQSLLNGNK…DNTLFPHQDD (163 aa)).

This sequence belongs to the SIS family. DiaA subfamily. In terms of assembly, homotetramer; dimer of dimers.

Functionally, required for the timely initiation of chromosomal replication via direct interactions with the DnaA initiator protein. This is DnaA initiator-associating protein DiaA from Cronobacter sakazakii (strain ATCC BAA-894) (Enterobacter sakazakii).